The primary structure comprises 388 residues: Sex-determination protein fem-3 (388 aa).

6 consecutive repeat copies span residues 7 to 10 (SDDV), 110 to 113 (ITRF), 141 to 144 (ITRF), 234 to 237 (YHTT), 284 to 287 (YHTT), and 371 to 374 (SDDV).

Component of a complex containing fem-1, fem-2 and fem-3. Interacts with fem-1 and fem-2 (via N-terminus). Part of a E3 ubiquitin-protein ligase complex, at least composed of cul-2, elc-1, tra-1, fem-1, fem-2 and fem-3; mediates the ubiquitination and subsequent proteasomal degradation of tra-1. Interacts with tra-1. Interacts with sel-10. Interacts with tra-2.

Functionally, required for male development. In XO (male) animals, fem-3 directs male differentiation in all tissues. In XX (hermaphrodite) animals, it specifies the first 80 or so germ cells to be sperm. Negatively regulates male development when bound to tra-2. Together with fem-2 associates with the CBC(fem-1) E3 ubiquitin-protein ligase complex which mediates the ubiquitination and subsequent proteasomal degradation of tra-1. In Caenorhabditis elegans, this protein is Sex-determination protein fem-3 (fem-3).